The sequence spans 63 residues: UPF0434 protein GDI0182/Gdia_2252 (63 aa).

It belongs to the UPF0434 family.

The polypeptide is UPF0434 protein GDI0182/Gdia_2252 (Gluconacetobacter diazotrophicus (strain ATCC 49037 / DSM 5601 / CCUG 37298 / CIP 103539 / LMG 7603 / PAl5)).